A 387-amino-acid chain; its full sequence is Protein kinase gsk3 (387 aa).

The 285-residue stretch at 32 to 316 (YTSSKVVGSG…AAEAMCHPFF (285 aa)) folds into the Protein kinase domain. ATP-binding positions include 38–46 (VGSGSFGVV) and Lys61. The active-site Proton acceptor is Asp157. Ser191 carries the post-translational modification Phosphoserine. Residue Tyr192 is modified to Phosphotyrosine; by autocatalysis. Residue Ser335 is modified to Phosphoserine.

It belongs to the protein kinase superfamily. CMGC Ser/Thr protein kinase family. GSK-3 subfamily. Post-translationally, autophosphorylated on tyrosine residues.

The protein resides in the cytoplasm. The protein localises to the nucleus. It catalyses the reaction L-seryl-[protein] + ATP = O-phospho-L-seryl-[protein] + ADP + H(+). It carries out the reaction L-threonyl-[protein] + ATP = O-phospho-L-threonyl-[protein] + ADP + H(+). Interacts with cdc14 which is thought to play a role in the initiation and completion of mitosis. Involved in the positive regulation of mis12. This Schizosaccharomyces pombe (strain 972 / ATCC 24843) (Fission yeast) protein is Protein kinase gsk3 (gsk3).